The sequence spans 258 residues: Type III pantothenate kinase (258 aa).

Asp6–Val13 contacts ATP. Residue Gly108 to Arg111 participates in substrate binding. Asp110 acts as the Proton acceptor in catalysis. Residue Asp130 participates in K(+) binding. Position 133 (Thr133) interacts with ATP. A substrate-binding site is contributed by Thr185.

The protein belongs to the type III pantothenate kinase family. As to quaternary structure, homodimer. The cofactor is NH4(+). K(+) serves as cofactor.

It is found in the cytoplasm. The catalysed reaction is (R)-pantothenate + ATP = (R)-4'-phosphopantothenate + ADP + H(+). It functions in the pathway cofactor biosynthesis; coenzyme A biosynthesis; CoA from (R)-pantothenate: step 1/5. Catalyzes the phosphorylation of pantothenate (Pan), the first step in CoA biosynthesis. This is Type III pantothenate kinase from Thermobifida fusca (strain YX).